The sequence spans 175 residues: Transcriptional activatory protein BadR (175 aa).

In terms of domain architecture, HTH marR-type spans 20–156; it reads ANRLFFRLYQ…TLHYLLKILD (137 aa).

Functionally, transcriptional activator of genes for the anaerobic degradation of benzoate. This Rhodopseudomonas palustris (strain ATCC BAA-98 / CGA009) protein is Transcriptional activatory protein BadR (badR).